The primary structure comprises 241 residues: B9 domain-containing protein 1 (241 aa).

Residues 1–42 form a disordered region; that stretch reads MSASEGISLPGNEETTPPHEKHKQKAKKAKKKSRSAKESVPN. The span at 20–34 shows a compositional bias: basic residues; the sequence is EKHKQKAKKAKKKSR. The region spanning 53–197 is the C2 B9-type domain; sequence FSLSIVGQIV…TSWLLRREPE (145 aa).

It belongs to the B9D family. In terms of assembly, probable component of the tectonic-like complex (also named MKS complex), composed of B9d1, B9d2, Cc2d2a, Mks1 and tctn. Expressed in type I sensory neurons (at protein level). Expressed in spermatids and spermatocytes (at protein level).

The protein resides in the cytoplasm. Its subcellular location is the cytoskeleton. It is found in the cilium basal body. Its function is as follows. Probable component of the tectonic-like complex (also named MKS complex), a complex localized at the transition zone of primary cilia. Required for ciliary structure and function. The protein is B9 domain-containing protein 1 of Drosophila melanogaster (Fruit fly).